Here is a 370-residue protein sequence, read N- to C-terminus: tRNA-specific 2-thiouridylase MnmA (370 aa).

ATP contacts are provided by residues 19–26 (AMSGGVDS) and Leu45. Cys113 functions as the Nucleophile in the catalytic mechanism. Cys113 and Cys209 form a disulfide bridge. Residue Gly137 coordinates ATP. Residues 159-161 (KDQ) form an interaction with tRNA region. Residue Cys209 is the Cysteine persulfide intermediate of the active site.

It belongs to the MnmA/TRMU family.

The protein localises to the cytoplasm. The catalysed reaction is S-sulfanyl-L-cysteinyl-[protein] + uridine(34) in tRNA + AH2 + ATP = 2-thiouridine(34) in tRNA + L-cysteinyl-[protein] + A + AMP + diphosphate + H(+). In terms of biological role, catalyzes the 2-thiolation of uridine at the wobble position (U34) of tRNA, leading to the formation of s(2)U34. This Rickettsia conorii (strain ATCC VR-613 / Malish 7) protein is tRNA-specific 2-thiouridylase MnmA.